The primary structure comprises 375 residues: Filamin-binding LIM protein 1 (375 aa).

The interval 1 to 69 is filamin-binding; sequence MASKPEKRVA…KTWTPSGKTN (69 aa). Residues 40 to 176 are disordered; sequence ARPWEMLPTK…PPPEEPVTLP (137 aa). Polar residues predominate over residues 60–83; the sequence is KTWTPSGKTNASLSGVTPQLSNGG. 2 stretches are compositionally biased toward pro residues: residues 98-107 and 133-144; these read LPPPPPPPSA and LPPPPPPPPPQA. 3 consecutive LIM zinc-binding domains span residues 183–244, 245–302, and 303–372; these read DVCG…TLEK, CGKC…RKFA, and PVCS…RSAA. Residues 278 to 375 are FERMT2-binding; that stretch reads ISDESFALDS…HLKRSAAGCC (98 aa).

As to quaternary structure, interacts with FERMT2, FLNA, FLNB and FLNC. Interacts with NKX2-5.

Its subcellular location is the cell junction. The protein localises to the focal adhesion. The protein resides in the cytoplasm. It is found in the cytoskeleton. It localises to the stress fiber. In terms of biological role, serves as an anchoring site for cell-ECM adhesion proteins and filamin-containing actin filaments. Is implicated in cell shape modulation (spreading) and motility. May participate in the regulation of filamin-mediated cross-linking and stabilization of actin filaments. May also regulate the assembly of filamin-containing signaling complexes that control actin assembly. Promotes dissociation of FLNA from ITGB3 and ITGB7. Promotes activation of integrins and regulates integrin-mediated cell-cell adhesion. The chain is Filamin-binding LIM protein 1 (Fblim1) from Mus musculus (Mouse).